We begin with the raw amino-acid sequence, 333 residues long: Gramillins biosynthetic cluster protein FGSG_00039 (333 aa).

Its pathway is mycotoxin biosynthesis. In terms of biological role, part of the gene cluster that mediates the biosynthesis of gramillins A and B, bicyclic lipopeptides that induce cell death in maize leaves but not in wheat leaves. The nonribosomal peptide synthetase GRA1 incorporates respectively a glutamic adic (Glu), a leucine (Leu), a serine (Ser), a hydroxyglutamine (HOGln), a 2-amino decanoic acid, and 2 cysteins (CysB and CysA). The biosynthesis of 2-amino decanoic acid incorporated in gramillins could be initiated by a fatty acid synthase composed of the alpha and beta subunits FGSG_00036 and FGSG_11656. The cytochrome P450 monooxygenase FGSG_15680 could hydroxylate the fatty acid chain. Subsequent oxidation to the ketone by the oxidoreductase FGSG_00048 and transamination by aminotransferase FGSG_00049 could form 2-amino-decanoic acid. On the other hand, FGSG_15680 could also be responsible for the HO-modified glutamine at the gamma-position. Whether hydroxylation occurs on the fully assembled product or on the Gln residue prior to assembly into the gramillins requires further proof. The thioredoxin FGSG_00043 could also be required for the disulfide-bond formation between CysA and CysB. The specific involvement of the remaining proteins from the cluster is more difficult to discern, but could have broader regulatory (FGSG_00040 and FGSG_11657) or enzymatic functions (FGSG_00044 and FGSG_00045). The final C-domain of GRA1 does not possess the expected sequence of a termination CT domain, often implicated in macrocyclization and release of a cyclopeptidein fungal NRPs; and the thioesterase FGSG_00047 may act in concert with the terminal C-domain of GRA1 to catalyze the formation of the macrocyclic anhydride and release of the products. This is Gramillins biosynthetic cluster protein FGSG_00039 from Gibberella zeae (strain ATCC MYA-4620 / CBS 123657 / FGSC 9075 / NRRL 31084 / PH-1) (Wheat head blight fungus).